The primary structure comprises 286 residues: Putative chaperone BssE (286 aa).

Residues 47 to 54 (GKQGCGKS) and 108 to 115 (GCVIHLEE) contribute to the ATP site.

The protein belongs to the CbbQ/NirQ/NorQ/GpvN family.

May have a role in assembly and/or activation of benzylsuccinate synthase. The sequence is that of Putative chaperone BssE (bssE) from Thauera aromatica.